The sequence spans 203 residues: CASP-like protein 2U6 (203 aa).

Topologically, residues 1 to 31 (MSEHRIPVAADKKISPPISAGEQKGCKGLKR) are cytoplasmic. The helical transmembrane segment at 32-52 (TDLMLRFAAFVCCTVTMVVLI) threads the bilayer. Residues 53–84 (TDKQTSAIQVPGFNNLTITKTVSFDLAKAFVY) lie on the Extracellular side of the membrane. An N-linked (GlcNAc...) asparagine glycan is attached at N67. Residues 85 to 105 (LVSAAGIGAGYTLLVLVLSII) form a helical membrane-spanning segment. At 106–111 (SAERSK) the chain is on the cytoplasmic side. The chain crosses the membrane as a helical span at residues 112 to 132 (AIAWFIFVFDQLITYVLLAAA). Over 133–164 (AASTEVAYMGAHAPPEASWLKVCSLFGRFCHQ) the chain is Extracellular. The chain crosses the membrane as a helical span at residues 165–185 (LGASLVTSLISTVLFAFSAAI). Residues 186-203 (SAYYLFSNTNVRPAYSKG) are Cytoplasmic-facing.

It belongs to the Casparian strip membrane proteins (CASP) family. In terms of assembly, homodimer and heterodimers.

The protein resides in the cell membrane. The protein is CASP-like protein 2U6 of Selaginella moellendorffii (Spikemoss).